The primary structure comprises 270 residues: 3-methyl-2-oxobutanoate hydroxymethyltransferase (270 aa).

2 residues coordinate Mg(2+): aspartate 50 and aspartate 89. 3-methyl-2-oxobutanoate-binding positions include 50 to 51 (DS), aspartate 89, and lysine 118. A Mg(2+)-binding site is contributed by glutamate 120. Glutamate 187 (proton acceptor) is an active-site residue.

This sequence belongs to the PanB family. As to quaternary structure, homodecamer; pentamer of dimers. The cofactor is Mg(2+).

It localises to the cytoplasm. It catalyses the reaction 3-methyl-2-oxobutanoate + (6R)-5,10-methylene-5,6,7,8-tetrahydrofolate + H2O = 2-dehydropantoate + (6S)-5,6,7,8-tetrahydrofolate. It participates in cofactor biosynthesis; (R)-pantothenate biosynthesis; (R)-pantoate from 3-methyl-2-oxobutanoate: step 1/2. Functionally, catalyzes the reversible reaction in which hydroxymethyl group from 5,10-methylenetetrahydrofolate is transferred onto alpha-ketoisovalerate to form ketopantoate. This Helicobacter pylori (strain G27) protein is 3-methyl-2-oxobutanoate hydroxymethyltransferase.